The primary structure comprises 201 residues: Orotate phosphoribosyltransferase (201 aa).

A 5-phospho-alpha-D-ribose 1-diphosphate-binding site is contributed by 113 to 121 (EDIITTGKS). Residues Thr117 and Arg145 each coordinate orotate.

The protein belongs to the purine/pyrimidine phosphoribosyltransferase family. PyrE subfamily. Homodimer. Mg(2+) serves as cofactor.

The enzyme catalyses orotidine 5'-phosphate + diphosphate = orotate + 5-phospho-alpha-D-ribose 1-diphosphate. The protein operates within pyrimidine metabolism; UMP biosynthesis via de novo pathway; UMP from orotate: step 1/2. Its function is as follows. Catalyzes the transfer of a ribosyl phosphate group from 5-phosphoribose 1-diphosphate to orotate, leading to the formation of orotidine monophosphate (OMP). The polypeptide is Orotate phosphoribosyltransferase (Helicobacter pylori (strain G27)).